A 56-amino-acid polypeptide reads, in one-letter code: Alpha-pompilidotoxin (56 aa).

A signal peptide spans 1–22 (MFKQLILLALAAVFLLINISSA). A propeptide spanning residues 23–42 (EPAAEPNANAEPLAEASAEP) is cleaved from the precursor. A Leucine amide modification is found at Leu-55.

As to expression, expressed by the venom gland.

Its subcellular location is the secreted. Its function is as follows. Inhibits sodium channels (Nav) inactivation. Shows two types of inhibitory activities on channels. Inhibition of hNav1.6/SCN8A shows a large increase in the steady-state current component without any increase in the slow component, whereas inhibition of hNav1.1/SCN1A, hNav1.2/SCN2A, hNav1.3/SCN3A and hNav1.7/SCN9A shows a large increase in the slow component with only a small steady-state component. Is 5-fold less potent than beta-PMTX for inducing repetitive action potentials in lobster neuromuscular junctions. The polypeptide is Alpha-pompilidotoxin (Anoplius samariensis (Solitary wasp)).